A 344-amino-acid polypeptide reads, in one-letter code: GTPase Obg (344 aa).

The Obg domain maps to 1 to 159 (MKFLDLAKVY…RTIWLRLKLI (159 aa)). Residues 160-326 (ADVGLLGLPN…VLRVLRARVD (167 aa)) form the OBG-type G domain. GTP contacts are provided by residues 166-173 (GLPNAGKS), 191-195 (FTTLV), 212-215 (DIPG), 279-282 (NKID), and 307-309 (SGV). Serine 173 and threonine 193 together coordinate Mg(2+).

It belongs to the TRAFAC class OBG-HflX-like GTPase superfamily. OBG GTPase family. As to quaternary structure, monomer. Requires Mg(2+) as cofactor.

Its subcellular location is the cytoplasm. Functionally, an essential GTPase which binds GTP, GDP and possibly (p)ppGpp with moderate affinity, with high nucleotide exchange rates and a fairly low GTP hydrolysis rate. Plays a role in control of the cell cycle, stress response, ribosome biogenesis and in those bacteria that undergo differentiation, in morphogenesis control. This Jannaschia sp. (strain CCS1) protein is GTPase Obg.